We begin with the raw amino-acid sequence, 408 residues long: tRNA-specific 2-thiouridylase MnmA (408 aa).

Residues 27–34 (AMSGGVDS) and L53 contribute to the ATP site. The active-site Nucleophile is the C121. Cysteines 121 and 222 form a disulfide. G145 contributes to the ATP binding site. The tract at residues 172–174 (RDQ) is interaction with tRNA. C222 (cysteine persulfide intermediate) is an active-site residue.

The protein belongs to the MnmA/TRMU family.

Its subcellular location is the cytoplasm. It catalyses the reaction S-sulfanyl-L-cysteinyl-[protein] + uridine(34) in tRNA + AH2 + ATP = 2-thiouridine(34) in tRNA + L-cysteinyl-[protein] + A + AMP + diphosphate + H(+). In terms of biological role, catalyzes the 2-thiolation of uridine at the wobble position (U34) of tRNA, leading to the formation of s(2)U34. The chain is tRNA-specific 2-thiouridylase MnmA from Rhizobium etli (strain ATCC 51251 / DSM 11541 / JCM 21823 / NBRC 15573 / CFN 42).